Here is a 64-residue protein sequence, read N- to C-terminus: Small ribosomal subunit protein bS21 (64 aa).

This sequence belongs to the bacterial ribosomal protein bS21 family.

This is Small ribosomal subunit protein bS21 from Flavobacterium johnsoniae (strain ATCC 17061 / DSM 2064 / JCM 8514 / BCRC 14874 / CCUG 350202 / NBRC 14942 / NCIMB 11054 / UW101) (Cytophaga johnsonae).